The sequence spans 300 residues: 4-hydroxy-tetrahydrodipicolinate synthase (300 aa).

T57 contributes to the pyruvate binding site. Catalysis depends on Y145, which acts as the Proton donor/acceptor. The active-site Schiff-base intermediate with substrate is the K173. A pyruvate-binding site is contributed by I213.

Belongs to the DapA family. Homotetramer; dimer of dimers.

The protein localises to the cytoplasm. It catalyses the reaction L-aspartate 4-semialdehyde + pyruvate = (2S,4S)-4-hydroxy-2,3,4,5-tetrahydrodipicolinate + H2O + H(+). Its pathway is amino-acid biosynthesis; L-lysine biosynthesis via DAP pathway; (S)-tetrahydrodipicolinate from L-aspartate: step 3/4. Functionally, catalyzes the condensation of (S)-aspartate-beta-semialdehyde [(S)-ASA] and pyruvate to 4-hydroxy-tetrahydrodipicolinate (HTPA). This chain is 4-hydroxy-tetrahydrodipicolinate synthase, found in Corynebacterium jeikeium (strain K411).